We begin with the raw amino-acid sequence, 472 residues long: Adenosylhomocysteinase (472 aa).

Substrate-binding residues include Thr-61, Asp-139, and Glu-198. 199–201 (TTT) serves as a coordination point for NAD(+). Substrate contacts are provided by Lys-228 and Asp-232. Residues Asn-233, 262–267 (GFGDVG), Glu-285, Asn-320, 341–343 (IGH), and Asn-386 contribute to the NAD(+) site.

The protein belongs to the adenosylhomocysteinase family. NAD(+) is required as a cofactor.

The protein resides in the cytoplasm. It catalyses the reaction S-adenosyl-L-homocysteine + H2O = L-homocysteine + adenosine. It participates in amino-acid biosynthesis; L-homocysteine biosynthesis; L-homocysteine from S-adenosyl-L-homocysteine: step 1/1. Its function is as follows. May play a key role in the regulation of the intracellular concentration of adenosylhomocysteine. The protein is Adenosylhomocysteinase of Sphingopyxis alaskensis (strain DSM 13593 / LMG 18877 / RB2256) (Sphingomonas alaskensis).